The primary structure comprises 197 residues: Molybdenum cofactor guanylyltransferase (197 aa).

GTP contacts are provided by residues 10-12 (LAG), lysine 23, asparagine 51, aspartate 69, and aspartate 99. Position 99 (aspartate 99) interacts with Mg(2+).

The protein belongs to the MobA family. In terms of assembly, monomer. Mg(2+) serves as cofactor.

The protein localises to the cytoplasm. It catalyses the reaction Mo-molybdopterin + GTP + H(+) = Mo-molybdopterin guanine dinucleotide + diphosphate. Transfers a GMP moiety from GTP to Mo-molybdopterin (Mo-MPT) cofactor (Moco or molybdenum cofactor) to form Mo-molybdopterin guanine dinucleotide (Mo-MGD) cofactor. This Shewanella sp. (strain ANA-3) protein is Molybdenum cofactor guanylyltransferase.